The following is a 330-amino-acid chain: 4-hydroxythreonine-4-phosphate dehydrogenase (330 aa).

Substrate is bound by residues His-134 and Thr-135. Residues His-163, His-208, and His-263 each coordinate a divalent metal cation. Substrate is bound by residues Lys-271, Asn-280, and Arg-289.

It belongs to the PdxA family. As to quaternary structure, homodimer. Zn(2+) serves as cofactor. Mg(2+) is required as a cofactor. The cofactor is Co(2+).

The protein resides in the cytoplasm. It carries out the reaction 4-(phosphooxy)-L-threonine + NAD(+) = 3-amino-2-oxopropyl phosphate + CO2 + NADH. The protein operates within cofactor biosynthesis; pyridoxine 5'-phosphate biosynthesis; pyridoxine 5'-phosphate from D-erythrose 4-phosphate: step 4/5. Functionally, catalyzes the NAD(P)-dependent oxidation of 4-(phosphooxy)-L-threonine (HTP) into 2-amino-3-oxo-4-(phosphooxy)butyric acid which spontaneously decarboxylates to form 3-amino-2-oxopropyl phosphate (AHAP). In Methylococcus capsulatus (strain ATCC 33009 / NCIMB 11132 / Bath), this protein is 4-hydroxythreonine-4-phosphate dehydrogenase.